A 79-amino-acid chain; its full sequence is Darcynin (79 aa).

The protein belongs to the darcynin family.

The polypeptide is Darcynin (Chromobacterium violaceum (strain ATCC 12472 / DSM 30191 / JCM 1249 / CCUG 213 / NBRC 12614 / NCIMB 9131 / NCTC 9757 / MK)).